Consider the following 515-residue polypeptide: N-acetylglucosamine-1-phosphodiester alpha-N-acetylglucosaminidase (515 aa).

A signal peptide spans 1–25 (MATSTGRWLLLRLALFGFLWEASGG). Positions 26–49 (LDSGASRDDDLLLPYPRARARLPR) are cleaved as a propeptide — removed in mature form. Residues 50–448 (DCTRVRAGNR…AGELSFFTRT (399 aa)) lie on the Lumenal side of the membrane. 5 disulfides stabilise this stretch: cysteine 115–cysteine 148, cysteine 132–cysteine 323, cysteine 307–cysteine 314, cysteine 362–cysteine 373, and cysteine 380–cysteine 389. Residues asparagine 208, asparagine 214, and asparagine 296 are each glycosylated (N-linked (GlcNAc...) asparagine). An EGF-like domain is found at 358-390 (DELDCGPSNCSQHGLCTETGCRCDAGWTGSNCS). 3 N-linked (GlcNAc...) asparagine glycosylation sites follow: asparagine 366, asparagine 388, and asparagine 420. Residues 449-469 (AWLALTLALAFLLLISTAANL) traverse the membrane as a helical segment. The Cytoplasmic segment spans residues 470–515 (SLLLSRAERNRRLHGDYAYHPLQEMNGEPLAAEKEQPGGAHNPFKD). A mediates the interaction with AP4M1 region spans residues 486–493 (YAYHPLQE). The Tyrosine-based internalization motif motif lies at 488–491 (YHPL). The NPF internalization motif signature appears at 511–515 (NPFKD).

In terms of assembly, homotetramer arranged as two disulfide-linked homodimers. Interacts with AP4M1. Post-translationally, the precursor is cleaved and activated in the trans-Golgi network by a furin endopeptidase. Isoform 2 may be brain-specific.

The protein localises to the golgi apparatus. Its subcellular location is the golgi stack membrane. It is found in the trans-Golgi network. The enzyme catalyses N(4)-[6-(N-acetyl-alpha-D-glucosaminyl-1-phospho)-alpha-D-mannosyl-(1-&gt;2)-alpha-D-mannosyl-(glycan)]-L-asparaginyl-[protein] + H2O = N(4)-[6-phospho-alpha-D-mannosyl-(1-&gt;2)-alpha-D-mannosyl-(glycan)]-L-asparaginyl-[protein] + N-acetyl-D-glucosamine + H(+). It participates in protein modification; protein glycosylation. Its function is as follows. Catalyzes the second step in the formation of the mannose 6-phosphate targeting signal on lysosomal enzyme oligosaccharides by removing GlcNAc residues from GlcNAc-alpha-P-mannose moieties, which are formed in the first step. Also hydrolyzes UDP-GlcNAc, a sugar donor for Golgi N-acetylglucosaminyltransferases. The chain is N-acetylglucosamine-1-phosphodiester alpha-N-acetylglucosaminidase (NAGPA) from Homo sapiens (Human).